A 466-amino-acid polypeptide reads, in one-letter code: Probable WRKY transcription factor 32 (466 aa).

Disordered regions lie at residues 1 to 45 (MEED…MEDL) and 140 to 166 (SVPT…PRTP). Over residues 8-38 (DEAKTYTVEKSEKVEPEKDGLSQFRDEEKSL) the composition is skewed to basic and acidic residues. The segment at residues 162–226 (VPRTPARDGY…NKGLHTHEPP (65 aa)) is a DNA-binding region (WRKY 1). Zn(2+)-binding residues include C193, C198, H221, and H223. Positions 284 to 317 (HCENEAVEEPEPKRRLKKDNSQSSDSVSKPGKKN) are disordered. A DNA-binding region (WRKY 2) is located at residues 325–390 (GDVGICGDGY…YKGVHNHDMP (66 aa)). 4 residues coordinate Zn(2+): C356, C361, H385, and H387. The interval 410–439 (TSMRTRTDDQVNIPTSSQCSVGRESEKQSK) is disordered. Positions 419-429 (QVNIPTSSQCS) are enriched in polar residues.

It belongs to the WRKY group I family.

It localises to the nucleus. In terms of biological role, transcription factor. Interacts specifically with the W box (5'-(T)TGAC[CT]-3'), a frequently occurring elicitor-responsive cis-acting element. The polypeptide is Probable WRKY transcription factor 32 (WRKY32) (Arabidopsis thaliana (Mouse-ear cress)).